We begin with the raw amino-acid sequence, 92 residues long: Large ribosomal subunit protein bL27 (92 aa).

Residues 1–20 (MAHKKAGGSTRNGRDSNPKY) form a disordered region.

Belongs to the bacterial ribosomal protein bL27 family.

In Legionella pneumophila (strain Paris), this protein is Large ribosomal subunit protein bL27.